The primary structure comprises 697 residues: Elongation factor G (697 aa).

A tr-type G domain is found at 8–283; the sequence is EHIRNIGICA…AVVDFLPSPT (276 aa). GTP-binding positions include 17–24, 81–85, and 135–138; these read AHIDAGKT, DTPGH, and NKMD.

The protein belongs to the TRAFAC class translation factor GTPase superfamily. Classic translation factor GTPase family. EF-G/EF-2 subfamily.

The protein resides in the cytoplasm. In terms of biological role, catalyzes the GTP-dependent ribosomal translocation step during translation elongation. During this step, the ribosome changes from the pre-translocational (PRE) to the post-translocational (POST) state as the newly formed A-site-bound peptidyl-tRNA and P-site-bound deacylated tRNA move to the P and E sites, respectively. Catalyzes the coordinated movement of the two tRNA molecules, the mRNA and conformational changes in the ribosome. In Rickettsia massiliae (strain Mtu5), this protein is Elongation factor G.